The chain runs to 330 residues: Zinc finger protein Gfi-1b (330 aa).

The tract at residues 1–20 (MPRSFLVKSKKAHTYHQPRV) is SNAG domain. Residues 1–42 (MPRSFLVKSKKAHTYHQPRVQEDEPLWPPALTPVPRDQAPSN) form a disordered region. Lysine 8 is modified (N6,N6-dimethyllysine). Residues 91-330 (GDSPLSDSPP…RHRESQHNLK (240 aa)) are interaction with ARIH2. C2H2-type zinc fingers lie at residues 163-186 (YHCVKCNKVFSTPHGLEVHVRRSH), 192-214 (FACDICGKTFGHAVSLEQHTHVH), 220-242 (FECRMCGKAFKRSSTLSTHLLIH), 248-270 (YPCQFCGKRFHQKSDMKKHTYIH), 276-298 (HKCQVCGKAFSQSSNLITHSRKH), and 304-327 (FSCELCTKGFQRKVDLRRHRESQH). The mediates interaction with GATA1 stretch occupies residues 164–330 (HCVKCNKVFS…RHRESQHNLK (167 aa)).

As to quaternary structure, component of a RCOR-GFI-KDM1A-HDAC complex. Interacts directly with RCOR1, KDM1A and HDAC2. Forms a complex with GATA1. Interacts with histone methyltransferases EHMT2 and SUV39H1. Interacts with ARIH2 (via RING-type 2). Interacts with RUNX1T1. Post-translationally, methylation at Lys-8 in the SNAG domain seems required for the recruitment of the corepressor complex. As to expression, expressed in bone marrow and fetal liver, but also detectable in fetal spleen, fetal thymus, and testes. Detected in hematopoietic stem cells, erythroblasts, and megakaryocytes. Overexpressed in bone marrow of patients with erythroleukemia and megakaryocytic leukemia as well as in their corresponding leukemic cell lines, and markedly repressed in severe aplastic anemia (SAA).

The protein localises to the nucleus. In terms of biological role, essential proto-oncogenic transcriptional regulator necessary for development and differentiation of erythroid and megakaryocytic lineages. Component of a RCOR-GFI-KDM1A-HDAC complex that suppresses, via histone deacetylase (HDAC) recruitment, a number of genes implicated in multilineage blood cell development and controls hematopoietic differentiation. Transcriptional repressor or activator depending on both promoter and cell type context; represses promoter activity of SOCS1 and SOCS3 and thus, may regulate cytokine signaling pathways. Cooperates with GATA1 to repress target gene transcription, such as the apoptosis regulator BCL2L1; GFI1B silencing in leukemic cell lines markedly increase apoptosis rate. Inhibits down-regulation of MYC and MYB as well as the cyclin-dependent kinase inhibitor CDKN1A/P21WAF1 in IL6-treated myelomonocytic cells. Represses expression of GATA3 in T-cell lymphomas and inhibits GATA1-mediated transcription; as GATA1 also mediates erythroid GFI1B transcription, both GATA1 and GFI1B participate in a feedback regulatory pathway controlling the expression of GFI1B gene in erythroid cells. Suppresses GATA1-mediated stimulation of GFI1B promoter through protein interaction. Binds to gamma-satellite DNA and to its own promoter, auto-repressing its own expression. Alters histone methylation by recruiting histone methyltransferase to target genes promoters. Plays a role in heterochromatin formation. This chain is Zinc finger protein Gfi-1b (GFI1B), found in Homo sapiens (Human).